We begin with the raw amino-acid sequence, 431 residues long: Homeobox protein knotted-1-like 3 (431 aa).

A disordered region spans residues 15-47; that stretch reads NHFTDQHQPPPPQPPPPPPQQQQHFQEAPPPNW. Over residues 22 to 34 the composition is skewed to pro residues; that stretch reads QPPPPQPPPPPPQ. Positions 322–342 constitute an ELK domain; that stretch reads ELKHELKQGYKEKIVDIREEI. A DNA-binding region (homeobox; TALE-type) is located at residues 343 to 406; it reads LRKRRAGKLP…NQRKRNWHSN (64 aa). The disordered stretch occupies residues 402-431; sequence NWHSNPSSSTVLKNKRKSNAGDNSGRERFA. Residues 404-413 are compositionally biased toward polar residues; it reads HSNPSSSTVL.

Belongs to the TALE/KNOX homeobox family. As to quaternary structure, may form heterodimeric complex with the TALE/BELL proteins. Interacts with OFP1, OFP2, OFP4, OFP12 and OFP14. Interacts with KNATM-B.

It is found in the nucleus. This is Homeobox protein knotted-1-like 3 (KNAT3) from Arabidopsis thaliana (Mouse-ear cress).